Reading from the N-terminus, the 107-residue chain is MSITLSDSAAARVNIFLANRGKGFGLRLGVRTSGCSGMAYVLEFVDEPMAEDTVFEDKGVKVVVDGKSLQFLDGTQLDFVKEGLNEGFKFSNPNVKDECGCGESFHV.

The Fe cation site is built by Cys35, Cys99, and Cys101.

The protein belongs to the HesB/IscA family. As to quaternary structure, homodimer; may form tetramers and higher multimers. It depends on Fe cation as a cofactor.

In terms of biological role, is able to transfer iron-sulfur clusters to apo-ferredoxin. Multiple cycles of [2Fe2S] cluster formation and transfer are observed, suggesting that IscA acts catalytically. Recruits intracellular free iron so as to provide iron for the assembly of transient iron-sulfur cluster in IscU in the presence of IscS, L-cysteine and the thioredoxin reductase system TrxA/TrxB. The chain is Iron-binding protein IscA from Salmonella newport (strain SL254).